The sequence spans 332 residues: Fructose-1,6-bisphosphatase class 1 (332 aa).

Glutamate 89, aspartate 110, leucine 112, and aspartate 113 together coordinate Mg(2+). Residues 113–116, asparagine 206, tyrosine 239, 257–259, and lysine 269 contribute to the substrate site; these read DGSS and YLY. Residue glutamate 275 participates in Mg(2+) binding.

Belongs to the FBPase class 1 family. Homotetramer. It depends on Mg(2+) as a cofactor.

Its subcellular location is the cytoplasm. It catalyses the reaction beta-D-fructose 1,6-bisphosphate + H2O = beta-D-fructose 6-phosphate + phosphate. Its pathway is carbohydrate biosynthesis; gluconeogenesis. The sequence is that of Fructose-1,6-bisphosphatase class 1 from Enterobacter sp. (strain 638).